A 195-amino-acid chain; its full sequence is CASP-like protein 2C2 (195 aa).

Over 1-18 the chain is Cytoplasmic; it reads MAATTAAAAVPGVVRAER. A helical membrane pass occupies residues 19–39; sequence LLRGGCVVMAATAALLLGFSA. Over 40–57 the chain is Extracellular; it reads ETKTVLFVRKTAVAKDVQ. The helical transmembrane segment at 58–78 threads the bilayer; sequence ALWVLTVAAAAAAGYQFAQLV. At 79-106 the chain is on the cytoplasmic side; the sequence is RCMYCSSSGDAGAMAVAWTSFLLDKGCA. A helical transmembrane segment spans residues 107-127; that stretch reads YVVFASTAAALQACMVGLIGV. Residues 128 to 145 are Extracellular-facing; the sequence is EALQWSKLCNIYTRFCEQ. A helical membrane pass occupies residues 146 to 166; the sequence is AAAGMLCSFLAAAGMAVLSAF. Over 167 to 195 the chain is Cytoplasmic; that stretch reads SARRLFRLYSPAGHRRSCPRAAVLATSPH.

The protein belongs to the Casparian strip membrane proteins (CASP) family. Homodimer and heterodimers.

It is found in the cell membrane. This Oryza sativa subsp. japonica (Rice) protein is CASP-like protein 2C2.